The following is a 407-amino-acid chain: Protein-glutamine gamma-glutamyltransferase (407 aa).

A signal peptide spans 1 to 31 (MRIRRRALVFATMSAVLCTAGFMPSAGEAAA). The propeptide occupies 32 to 76 (DNGAGEETKSYAETYRLTADDVANINALNESAPAASSAGPSFRAP). Residues 62–72 (SAPAASSAGPS) are compositionally biased toward low complexity. Residues 62–98 (SAPAASSAGPSFRAPDSDDRVTPPAEPLDRMPDPYRP) are disordered. Residues 76–94 (PDSDDRVTPPAEPLDRMPD) show a composition bias toward basic and acidic residues. Cys140 is an active-site residue. The interval 282 to 322 (QDRSSSADKRKYGDPDAFRPAPGTGLVDMSRDRNIPRSPTS) is disordered. Over residues 286–298 (SSADKRKYGDPDA) the composition is skewed to basic and acidic residues. Catalysis depends on residues Asp331 and His350.

This sequence belongs to the bacterial TGase family.

It catalyses the reaction L-glutaminyl-[protein] + L-lysyl-[protein] = [protein]-L-lysyl-N(6)-5-L-glutamyl-[protein] + NH4(+). Its function is as follows. Catalyzes the cross-linking of proteins and the conjugation of polyamines to proteins. The protein is Protein-glutamine gamma-glutamyltransferase of Streptomyces mobaraensis (Streptoverticillium mobaraense).